The following is a 483-amino-acid chain: Glutamyl-tRNA(Gln) amidotransferase subunit A (483 aa).

Active-site charge relay system residues include lysine 76 and serine 151. The active-site Acyl-ester intermediate is serine 175.

The protein belongs to the amidase family. GatA subfamily. Heterotrimer of A, B and C subunits.

It carries out the reaction L-glutamyl-tRNA(Gln) + L-glutamine + ATP + H2O = L-glutaminyl-tRNA(Gln) + L-glutamate + ADP + phosphate + H(+). Allows the formation of correctly charged Gln-tRNA(Gln) through the transamidation of misacylated Glu-tRNA(Gln) in organisms which lack glutaminyl-tRNA synthetase. The reaction takes place in the presence of glutamine and ATP through an activated gamma-phospho-Glu-tRNA(Gln). The polypeptide is Glutamyl-tRNA(Gln) amidotransferase subunit A (Pseudomonas putida (strain GB-1)).